We begin with the raw amino-acid sequence, 204 residues long: Thiamine-phosphate synthase (204 aa).

4-amino-2-methyl-5-(diphosphooxymethyl)pyrimidine-binding positions include 34–38 and aspartate 66; that span reads QYRDK. Residues aspartate 67 and aspartate 86 each contribute to the Mg(2+) site. Serine 104 provides a ligand contact to 4-amino-2-methyl-5-(diphosphooxymethyl)pyrimidine. 131–133 contacts 2-[(2R,5Z)-2-carboxy-4-methylthiazol-5(2H)-ylidene]ethyl phosphate; it reads TST. Residue lysine 134 participates in 4-amino-2-methyl-5-(diphosphooxymethyl)pyrimidine binding. Residues glycine 160 and 180-181 contribute to the 2-[(2R,5Z)-2-carboxy-4-methylthiazol-5(2H)-ylidene]ethyl phosphate site; that span reads VS.

Belongs to the thiamine-phosphate synthase family. Mg(2+) serves as cofactor.

The enzyme catalyses 2-[(2R,5Z)-2-carboxy-4-methylthiazol-5(2H)-ylidene]ethyl phosphate + 4-amino-2-methyl-5-(diphosphooxymethyl)pyrimidine + 2 H(+) = thiamine phosphate + CO2 + diphosphate. It carries out the reaction 2-(2-carboxy-4-methylthiazol-5-yl)ethyl phosphate + 4-amino-2-methyl-5-(diphosphooxymethyl)pyrimidine + 2 H(+) = thiamine phosphate + CO2 + diphosphate. It catalyses the reaction 4-methyl-5-(2-phosphooxyethyl)-thiazole + 4-amino-2-methyl-5-(diphosphooxymethyl)pyrimidine + H(+) = thiamine phosphate + diphosphate. It participates in cofactor biosynthesis; thiamine diphosphate biosynthesis; thiamine phosphate from 4-amino-2-methyl-5-diphosphomethylpyrimidine and 4-methyl-5-(2-phosphoethyl)-thiazole: step 1/1. Condenses 4-methyl-5-(beta-hydroxyethyl)thiazole monophosphate (THZ-P) and 2-methyl-4-amino-5-hydroxymethyl pyrimidine pyrophosphate (HMP-PP) to form thiamine monophosphate (TMP). This chain is Thiamine-phosphate synthase, found in Picrophilus torridus (strain ATCC 700027 / DSM 9790 / JCM 10055 / NBRC 100828 / KAW 2/3).